The following is a 622-amino-acid chain: Chaperone protein HscA homolog (622 aa).

This sequence belongs to the heat shock protein 70 family.

Functionally, chaperone involved in the maturation of iron-sulfur cluster-containing proteins. Has a low intrinsic ATPase activity which is markedly stimulated by HscB. This is Chaperone protein HscA homolog from Burkholderia thailandensis (strain ATCC 700388 / DSM 13276 / CCUG 48851 / CIP 106301 / E264).